Reading from the N-terminus, the 832-residue chain is Armadillo segment polarity protein (832 aa).

The span at 1–20 (MSYQMPQNRTMSHNPYNSSD) shows a compositional bias: polar residues. The tract at residues 1 to 24 (MSYQMPQNRTMSHNPYNSSDMPMP) is disordered. ARM repeat units follow at residues 146-185 (NYQD…QLSK), 188-228 (ASRH…NLSH), 230-269 (RQGL…NLLL), 272-311 (DGSK…ILAY), 356-395 (SSNK…NLSD), 397-434 (ATKV…NLTC), 483-524 (SESA…NLAL), 594-634 (ELNR…ELAV), and 636-675 (KEVA…KMSE). The interval 721–832 (AYEGLYGQGP…QVAAWYDTDL (112 aa)) is disordered. Residues 767–777 (PAGSNPNAGNN) show a composition bias toward low complexity.

The protein belongs to the beta-catenin family.

The protein resides in the cytoplasm. The protein localises to the cell membrane. Its subcellular location is the cell junction. It localises to the adherens junction. Functionally, may associate with CadN and participate in the transmission of developmental information. Can associate with alpha-catenin. Accumulates through wg signaling; arm function in wg signal transduction is required early in development for determination of neuroblast fate. Arm and Abl proteins function cooperatively at adherens junctions in both the CNS and epidermis. This chain is Armadillo segment polarity protein, found in Aedes aegypti (Yellowfever mosquito).